A 223-amino-acid polypeptide reads, in one-letter code: Small ribosomal subunit protein uS3 (223 aa).

The region spanning 39 to 115 is the KH type-2 domain; it reads IRKYIEKNLA…RVFINIVEIK (77 aa).

The protein belongs to the universal ribosomal protein uS3 family. In terms of assembly, part of the 30S ribosomal subunit. Forms a tight complex with proteins S10 and S14.

Binds the lower part of the 30S subunit head. Binds mRNA in the 70S ribosome, positioning it for translation. The protein is Small ribosomal subunit protein uS3 of Leuconostoc mesenteroides subsp. mesenteroides (strain ATCC 8293 / DSM 20343 / BCRC 11652 / CCM 1803 / JCM 6124 / NCDO 523 / NBRC 100496 / NCIMB 8023 / NCTC 12954 / NRRL B-1118 / 37Y).